An 874-amino-acid chain; its full sequence is Valine--tRNA ligase (874 aa).

The 'HIGH' region signature appears at 51–61 (PNVTGVLHIGH). The short motif at 533 to 537 (KMSKS) is the 'KMSKS' region element. Residue lysine 536 participates in ATP binding. Positions 813–873 (LVARLKKQLE…IKQELDLLEQ (61 aa)) form a coiled coil.

This sequence belongs to the class-I aminoacyl-tRNA synthetase family. ValS type 1 subfamily. Monomer.

It is found in the cytoplasm. The enzyme catalyses tRNA(Val) + L-valine + ATP = L-valyl-tRNA(Val) + AMP + diphosphate. Catalyzes the attachment of valine to tRNA(Val). As ValRS can inadvertently accommodate and process structurally similar amino acids such as threonine, to avoid such errors, it has a 'posttransfer' editing activity that hydrolyzes mischarged Thr-tRNA(Val) in a tRNA-dependent manner. The protein is Valine--tRNA ligase of Helicobacter pylori (strain ATCC 700392 / 26695) (Campylobacter pylori).